We begin with the raw amino-acid sequence, 22 residues long: FKSWSFCTPGCAKTGSFNSYCC.

Residues 3 to 7 (SWSFC) constitute a cross-link (lanthionine (Ser-Cys)). Residue serine 5 is modified to 2,3-didehydroalanine (Ser). Positions 8-11 (TPGC) form a cross-link, beta-methyllanthionine (Thr-Cys). A 2,3-didehydrobutyrine modification is found at threonine 14. The segment at residues 16–21 (SFNSYC) is a cross-link (lanthionine (Ser-Cys)). A cross-link (S-(2-aminovinyl)-D-cysteine (Ser-Cys)) is located at residues 19 to 22 (SYCC).

Post-translationally, maturation of lantibiotics involves the enzymatic conversion of Thr, and Ser into dehydrated AA and the formation of thioether bonds with cysteine. The C-terminal lanthionine undergoes decarboxylation. This is followed by membrane translocation and cleavage of the modified precursor. It is not established whether the 2,3-didehydrobutyrine is the E- or Z-isomer.

Lanthionine-containing peptide antibiotic (lantibiotic) active on Gram-positive bacteria. The bactericidal activity of lantibiotics is based on depolarization of energized bacterial cytoplasmic membranes, initiated by the formation of aqueous transmembrane pores. The chain is Lantibiotic mutacin B-Ny266 from Streptococcus mutans.